Reading from the N-terminus, the 430-residue chain is UDP-N-acetylglucosamine 1-carboxyvinyltransferase (430 aa).

22-23 serves as a coordination point for phosphoenolpyruvate; that stretch reads KN. Residue Arg-102 coordinates UDP-N-acetyl-alpha-D-glucosamine. The active-site Proton donor is Cys-126. Residue Cys-126 is modified to 2-(S-cysteinyl)pyruvic acid O-phosphothioketal. Residues 131–135, 172–175, Asp-317, and Ile-339 each bind UDP-N-acetyl-alpha-D-glucosamine; these read RPVDL and KVSV.

The protein belongs to the EPSP synthase family. MurA subfamily.

Its subcellular location is the cytoplasm. It catalyses the reaction phosphoenolpyruvate + UDP-N-acetyl-alpha-D-glucosamine = UDP-N-acetyl-3-O-(1-carboxyvinyl)-alpha-D-glucosamine + phosphate. Its pathway is cell wall biogenesis; peptidoglycan biosynthesis. Cell wall formation. Adds enolpyruvyl to UDP-N-acetylglucosamine. This Rhizobium johnstonii (strain DSM 114642 / LMG 32736 / 3841) (Rhizobium leguminosarum bv. viciae) protein is UDP-N-acetylglucosamine 1-carboxyvinyltransferase.